The chain runs to 388 residues: S-adenosylmethionine synthase (388 aa).

Histidine 16 provides a ligand contact to ATP. Position 18 (aspartate 18) interacts with Mg(2+). Glutamate 44 is a K(+) binding site. Glutamate 57 and glutamine 100 together coordinate L-methionine. The interval 100–110 is flexible loop; sequence QSPDIAQGVDK. ATP-binding positions include 167–169, 233–234, aspartate 242, 248–249, alanine 265, and lysine 269; these read DAK, RF, and RK. Aspartate 242 is an L-methionine binding site. Lysine 273 contributes to the L-methionine binding site.

This sequence belongs to the AdoMet synthase family. In terms of assembly, homotetramer; dimer of dimers. It depends on Mg(2+) as a cofactor. Requires K(+) as cofactor.

The protein localises to the cytoplasm. It carries out the reaction L-methionine + ATP + H2O = S-adenosyl-L-methionine + phosphate + diphosphate. It participates in amino-acid biosynthesis; S-adenosyl-L-methionine biosynthesis; S-adenosyl-L-methionine from L-methionine: step 1/1. In terms of biological role, catalyzes the formation of S-adenosylmethionine (AdoMet) from methionine and ATP. The overall synthetic reaction is composed of two sequential steps, AdoMet formation and the subsequent tripolyphosphate hydrolysis which occurs prior to release of AdoMet from the enzyme. This is S-adenosylmethionine synthase from Polynucleobacter asymbioticus (strain DSM 18221 / CIP 109841 / QLW-P1DMWA-1) (Polynucleobacter necessarius subsp. asymbioticus).